The primary structure comprises 618 residues: Uptake hydrogenase large subunit (618 aa).

The Ni(2+) site is built by C75, C78, C597, and C600.

Belongs to the [NiFe]/[NiFeSe] hydrogenase large subunit family. Heterodimer of a large and a small subunit. The cofactor is Ni(2+).

Its subcellular location is the cell membrane. The catalysed reaction is H2 + A = AH2. In terms of biological role, this enzyme recycles the H(2) produced by nitrogenase to increase the production of ATP and to protect nitrogenase against inhibition or damage by O(2) under carbon- or phosphate-limited conditions. The sequence is that of Uptake hydrogenase large subunit (hoxG) from Cupriavidus necator (strain ATCC 17699 / DSM 428 / KCTC 22496 / NCIMB 10442 / H16 / Stanier 337) (Ralstonia eutropha).